The sequence spans 233 residues: Glucosamine-6-phosphate deaminase (233 aa).

Asp62 acts as the Proton acceptor; for enolization step in catalysis. The active-site For ring-opening step is Asn128. His130 serves as the catalytic Proton acceptor; for ring-opening step. The active-site For ring-opening step is the Glu135.

It belongs to the glucosamine/galactosamine-6-phosphate isomerase family. NagB subfamily.

It carries out the reaction alpha-D-glucosamine 6-phosphate + H2O = beta-D-fructose 6-phosphate + NH4(+). Its pathway is amino-sugar metabolism; N-acetylneuraminate degradation; D-fructose 6-phosphate from N-acetylneuraminate: step 5/5. Catalyzes the reversible isomerization-deamination of glucosamine 6-phosphate (GlcN6P) to form fructose 6-phosphate (Fru6P) and ammonium ion. In Streptococcus agalactiae serotype Ia (strain ATCC 27591 / A909 / CDC SS700), this protein is Glucosamine-6-phosphate deaminase.